Consider the following 162-residue polypeptide: Small ribosomal subunit protein uS5 (162 aa).

The S5 DRBM domain occupies 11 to 74 (LTDRVVHISR…EQAKKNLIKV (64 aa)).

This sequence belongs to the universal ribosomal protein uS5 family. As to quaternary structure, part of the 30S ribosomal subunit. Contacts proteins S4 and S8.

In terms of biological role, with S4 and S12 plays an important role in translational accuracy. Its function is as follows. Located at the back of the 30S subunit body where it stabilizes the conformation of the head with respect to the body. This chain is Small ribosomal subunit protein uS5, found in Pelobacter propionicus (strain DSM 2379 / NBRC 103807 / OttBd1).